Reading from the N-terminus, the 429-residue chain is Probable M18 family aminopeptidase 2 (429 aa).

The Zn(2+) site is built by histidine 82, histidine 156, and histidine 401.

This sequence belongs to the peptidase M18 family. The cofactor is Zn(2+).

The protein is Probable M18 family aminopeptidase 2 of Pseudomonas paraeruginosa (strain DSM 24068 / PA7) (Pseudomonas aeruginosa (strain PA7)).